The primary structure comprises 575 residues: V-type ATP synthase alpha chain (575 aa).

Position 238–245 (238–245 (GPFGAGKT)) interacts with ATP.

It belongs to the ATPase alpha/beta chains family.

It catalyses the reaction ATP + H2O + 4 H(+)(in) = ADP + phosphate + 5 H(+)(out). Its function is as follows. Produces ATP from ADP in the presence of a proton gradient across the membrane. The V-type alpha chain is a catalytic subunit. The sequence is that of V-type ATP synthase alpha chain from Borreliella burgdorferi (strain ZS7) (Borrelia burgdorferi).